The primary structure comprises 347 residues: uncharacterized protein (347 aa).

The signal sequence occupies residues 1-26 (MQGRVAGSCAPLGLLLVCLHLPGLFA). The segment covering 41–60 (GTNLPQLGQPSSTGPSNSEH) has biased composition (polar residues). Disordered regions lie at residues 41–110 (GTNL…MDSW) and 148–189 (SGPL…AGGK). Low complexity predominate over residues 148–157 (SGPLPGESSP).

As to quaternary structure, binds to numerous extracellular matrix proteins.

The protein resides in the secreted. It is found in the extracellular space. The protein localises to the extracellular matrix. This is an uncharacterized protein from Pan troglodytes (Chimpanzee).